We begin with the raw amino-acid sequence, 83 residues long: Small ribosomal subunit protein eS21 (83 aa).

Belongs to the eukaryotic ribosomal protein eS21 family. As to quaternary structure, component of the 40S small ribosomal subunit.

The protein localises to the cytoplasm. It localises to the cytosol. Its subcellular location is the rough endoplasmic reticulum. The protein is Small ribosomal subunit protein eS21 (RpS21) of Biphyllus lunatus (Beetle).